An 83-amino-acid polypeptide reads, in one-letter code: Apolipoprotein C-I, basic form (83 aa).

The signal sequence occupies residues 1-26 (MRLFLSLPVLVVVLSMVLEGPAPVQG).

This sequence belongs to the apolipoprotein C1 family.

It is found in the secreted. In terms of biological role, inhibitor of lipoprotein binding to the low density lipoprotein (LDL) receptor, LDL receptor-related protein, and very low density lipoprotein (VLDL) receptor. Associates with high density lipoproteins (HDL) and the triacylglycerol-rich lipoproteins in the plasma and makes up about 10% of the protein of the VLDL and 2% of that of HDL. Appears to interfere directly with fatty acid uptake and is also the major plasma inhibitor of cholesteryl ester transfer protein (CETP). Binds free fatty acids and reduces their intracellular esterification. Modulates the interaction of APOE with beta-migrating VLDL and inhibits binding of beta-VLDL to the LDL receptor-related protein. This is Apolipoprotein C-I, basic form (APOC1) from Papio anubis (Olive baboon).